An 85-amino-acid chain; its full sequence is ATP synthase subunit c (85 aa).

A run of 2 helical transmembrane segments spans residues leucine 20–phenylalanine 40 and phenylalanine 65–alanine 85.

Belongs to the ATPase C chain family. F-type ATPases have 2 components, F(1) - the catalytic core - and F(0) - the membrane proton channel. F(1) has five subunits: alpha(3), beta(3), gamma(1), delta(1), epsilon(1). F(0) has three main subunits: a(1), b(2) and c(10-14). The alpha and beta chains form an alternating ring which encloses part of the gamma chain. F(1) is attached to F(0) by a central stalk formed by the gamma and epsilon chains, while a peripheral stalk is formed by the delta and b chains.

The protein resides in the cell inner membrane. Functionally, f(1)F(0) ATP synthase produces ATP from ADP in the presence of a proton or sodium gradient. F-type ATPases consist of two structural domains, F(1) containing the extramembraneous catalytic core and F(0) containing the membrane proton channel, linked together by a central stalk and a peripheral stalk. During catalysis, ATP synthesis in the catalytic domain of F(1) is coupled via a rotary mechanism of the central stalk subunits to proton translocation. Key component of the F(0) channel; it plays a direct role in translocation across the membrane. A homomeric c-ring of between 10-14 subunits forms the central stalk rotor element with the F(1) delta and epsilon subunits. The chain is ATP synthase subunit c from Gluconobacter oxydans (strain 621H) (Gluconobacter suboxydans).